The primary structure comprises 205 residues: uncharacterized protein (205 aa).

This sequence belongs to the IIV-6 170L family.

This is an uncharacterized protein from Invertebrate iridescent virus 3 (IIV-3).